The following is a 439-amino-acid chain: tRNA(Ile)-lysidine synthase (439 aa).

25 to 30 (SGGLDS) serves as a coordination point for ATP.

It belongs to the tRNA(Ile)-lysidine synthase family.

It localises to the cytoplasm. The catalysed reaction is cytidine(34) in tRNA(Ile2) + L-lysine + ATP = lysidine(34) in tRNA(Ile2) + AMP + diphosphate + H(+). Functionally, ligates lysine onto the cytidine present at position 34 of the AUA codon-specific tRNA(Ile) that contains the anticodon CAU, in an ATP-dependent manner. Cytidine is converted to lysidine, thus changing the amino acid specificity of the tRNA from methionine to isoleucine. The chain is tRNA(Ile)-lysidine synthase from Edwardsiella ictaluri (strain 93-146).